Reading from the N-terminus, the 224-residue chain is 2-C-methyl-D-erythritol 4-phosphate cytidylyltransferase (224 aa).

This sequence belongs to the IspD/TarI cytidylyltransferase family. IspD subfamily.

The catalysed reaction is 2-C-methyl-D-erythritol 4-phosphate + CTP + H(+) = 4-CDP-2-C-methyl-D-erythritol + diphosphate. It functions in the pathway isoprenoid biosynthesis; isopentenyl diphosphate biosynthesis via DXP pathway; isopentenyl diphosphate from 1-deoxy-D-xylulose 5-phosphate: step 2/6. In terms of biological role, catalyzes the formation of 4-diphosphocytidyl-2-C-methyl-D-erythritol from CTP and 2-C-methyl-D-erythritol 4-phosphate (MEP). This is 2-C-methyl-D-erythritol 4-phosphate cytidylyltransferase from Caldicellulosiruptor saccharolyticus (strain ATCC 43494 / DSM 8903 / Tp8T 6331).